The following is a 234-amino-acid chain: Phosphatidylcholine synthase (234 aa).

Over 1–3 (MKN) the chain is Cytoplasmic. Residues 4–24 (INLILAWLVHIFTASGLIVGL) traverse the membrane as a helical segment. The Periplasmic portion of the chain corresponds to 25–26 (YS). A helical membrane pass occupies residues 27 to 47 (IISIVNGNYSLLLKLTVIGLI). Topologically, residues 48 to 75 (IDGIDGTMARKLKVKELIPEIDGTLLDN) are cytoplasmic. The chain crosses the membrane as a helical span at residues 76–96 (ITDYINYTFIPVIFFYLGEFI). At 97–98 (EE) the chain is on the periplasmic side. A helical transmembrane segment spans residues 99-116 (KYKVAICIGILLSSAYQF). Residues 117–126 (SRTDAKTNDN) are Cytoplasmic-facing. A helical membrane pass occupies residues 127–147 (YFRGFPSLWNLFVILNIIFKM). Residues 148-149 (EQ) lie on the Periplasmic side of the membrane. The helical transmembrane segment at 150–170 (ITNLITMSICIITSFIPIKFI) threads the bilayer. The Cytoplasmic segment spans residues 171–180 (YPSKTKELRK). A helical membrane pass occupies residues 181–201 (ITIPITIISCLIFVVSIFSEL). Residues 202-207 (STTALK) lie on the Periplasmic side of the membrane. Residues 208–228 (MAKTVLILYFAYLTLASIYLT) form a helical membrane-spanning segment. Residues 229-234 (YKTRNR) are Cytoplasmic-facing.

Belongs to the CDP-alcohol phosphatidyltransferase class-I family. Mn(2+) serves as cofactor.

The protein resides in the cell inner membrane. It catalyses the reaction a CDP-1,2-diacyl-sn-glycerol + choline = a 1,2-diacyl-sn-glycero-3-phosphocholine + CMP + H(+). In terms of biological role, condenses choline with CDP-diglyceride to produce phosphatidylcholine and CMP. The chain is Phosphatidylcholine synthase from Borreliella burgdorferi (strain ATCC 35210 / DSM 4680 / CIP 102532 / B31) (Borrelia burgdorferi).